Here is a 193-residue protein sequence, read N- to C-terminus: SCO1 protein homolog (193 aa).

An N-terminal signal peptide occupies residues 1–18 (MKVIKGLTAGLIFLFLCA). A lipid anchor (N-palmitoyl cysteine) is attached at Cys-19. Cys-19 carries the S-diacylglycerol cysteine lipid modification. The Thioredoxin domain occupies 26 to 191 (DPLNYEVEPF…IISDVKSAST (166 aa)). Cys-64, Cys-68, and His-154 together coordinate Cu cation.

It belongs to the SCO1/2 family. In terms of assembly, monomer.

It localises to the cell membrane. Its function is as follows. Necessary for insertion of copper into the active site of cytochrome c oxidase. May play a role in copper homeostasis or redox signaling. This chain is SCO1 protein homolog (ypmQ), found in Bacillus subtilis (strain 168).